The primary structure comprises 206 residues: Peptidyl-tRNA hydrolase (206 aa).

Tyr-19 lines the tRNA pocket. Residue His-24 is the Proton acceptor of the active site. TRNA contacts are provided by Phe-70, Asn-72, and Asn-118.

The protein belongs to the PTH family. As to quaternary structure, monomer.

The protein localises to the cytoplasm. It carries out the reaction an N-acyl-L-alpha-aminoacyl-tRNA + H2O = an N-acyl-L-amino acid + a tRNA + H(+). Its function is as follows. Hydrolyzes ribosome-free peptidyl-tRNAs (with 1 or more amino acids incorporated), which drop off the ribosome during protein synthesis, or as a result of ribosome stalling. Catalyzes the release of premature peptidyl moieties from peptidyl-tRNA molecules trapped in stalled 50S ribosomal subunits, and thus maintains levels of free tRNAs and 50S ribosomes. This Synechococcus sp. (strain CC9902) protein is Peptidyl-tRNA hydrolase.